A 197-amino-acid polypeptide reads, in one-letter code: MKLILASASSARRSMLEQAGIDAESIPAAVDEDMVKQSMRAEGASAAETATALAHLKAERISRRYPDSVVIGSDQLLVCEGAWFDKAPDLERARARLLDFRGRAHHLVTSVVCAKGGSRLWHHVETPCLHMRRFSEDFLNRYLAQEGEALLGSVGCYRLEGPGIQLFDRIEGDYFSILGMPLLPLLGFLRQHQALTV.

Asp74 functions as the Proton acceptor in the catalytic mechanism.

Belongs to the Maf family. Requires a divalent metal cation as cofactor.

The protein localises to the cytoplasm. It carries out the reaction a ribonucleoside 5'-triphosphate + H2O = a ribonucleoside 5'-phosphate + diphosphate + H(+). It catalyses the reaction a 2'-deoxyribonucleoside 5'-triphosphate + H2O = a 2'-deoxyribonucleoside 5'-phosphate + diphosphate + H(+). Its function is as follows. Nucleoside triphosphate pyrophosphatase. May have a dual role in cell division arrest and in preventing the incorporation of modified nucleotides into cellular nucleic acids. This chain is Nucleoside triphosphate pyrophosphatase, found in Granulibacter bethesdensis (strain ATCC BAA-1260 / CGDNIH1).